The chain runs to 779 residues: Subtilisin-like protease SBT3.18 (779 aa).

The signal sequence occupies residues 1-21 (MYFWVMFFTLMIKVKLYITNG). The propeptide at 22–109 (DIFQNRPTVY…VFKSKSLKLH (88 aa)) is activation peptide. Positions 30 to 109 (VYVVYLGANR…VFKSKSLKLH (80 aa)) constitute an Inhibitor I9 domain. Residue N84 is glycosylated (N-linked (GlcNAc...) asparagine). The Peptidase S8 domain maps to 113–621 (SWDFLGLAVD…AGHINPLKAM (509 aa)). Active-site charge relay system residues include D144 and H221. Residues N236 and N406 are each glycosylated (N-linked (GlcNAc...) asparagine). S553 serves as the catalytic Charge relay system.

The protein belongs to the peptidase S8 family.

The protein localises to the secreted. This chain is Subtilisin-like protease SBT3.18, found in Arabidopsis thaliana (Mouse-ear cress).